The primary structure comprises 700 residues: Probable transcription factor FUP6 (700 aa).

2 disordered regions span residues serine 343 to serine 364 and phenylalanine 577 to glutamine 624. Polar residues predominate over residues phenylalanine 577 to serine 595. Over residues aspartate 596–serine 607 the composition is skewed to basic and acidic residues. Polar residues predominate over residues asparagine 608–asparagine 623.

The protein resides in the nucleus. Functionally, probable transcrition factor; part of the gene cluster that mediates the biosynthesis of the mycotoxin fusaproliferin (FUP) that belongs to the class of bicyclic sesterterpenoids. This is Probable transcription factor FUP6 from Fusarium proliferatum (strain ET1) (Orchid endophyte fungus).